The following is a 951-amino-acid chain: Valine--tRNA ligase (951 aa).

Residues 42-52 (PNVTGSLHMGH) carry the 'HIGH' region motif. The 'KMSKS' region signature appears at 554 to 558 (KMSKS). Lys557 is an ATP binding site. The stretch at 880-944 (AGLINKEDEL…AEAKAKLIEQ (65 aa)) forms a coiled coil.

Belongs to the class-I aminoacyl-tRNA synthetase family. ValS type 1 subfamily. As to quaternary structure, monomer.

It is found in the cytoplasm. The enzyme catalyses tRNA(Val) + L-valine + ATP = L-valyl-tRNA(Val) + AMP + diphosphate. Functionally, catalyzes the attachment of valine to tRNA(Val). As ValRS can inadvertently accommodate and process structurally similar amino acids such as threonine, to avoid such errors, it has a 'posttransfer' editing activity that hydrolyzes mischarged Thr-tRNA(Val) in a tRNA-dependent manner. The chain is Valine--tRNA ligase from Shigella dysenteriae serotype 1 (strain Sd197).